We begin with the raw amino-acid sequence, 588 residues long: Aspartate--tRNA ligase (588 aa).

Residue Glu177 participates in L-aspartate binding. The segment at 201–204 (QLFK) is aspartate. Arg223 lines the L-aspartate pocket. ATP is bound by residues 223 to 225 (RDE) and Gln232. His451 lines the L-aspartate pocket. Glu485 contacts ATP. Arg492 is an L-aspartate binding site. 537-540 (GLDR) contributes to the ATP binding site.

The protein belongs to the class-II aminoacyl-tRNA synthetase family. Type 1 subfamily. Homodimer.

The protein localises to the cytoplasm. It carries out the reaction tRNA(Asp) + L-aspartate + ATP = L-aspartyl-tRNA(Asp) + AMP + diphosphate. Catalyzes the attachment of L-aspartate to tRNA(Asp) in a two-step reaction: L-aspartate is first activated by ATP to form Asp-AMP and then transferred to the acceptor end of tRNA(Asp). In Staphylococcus carnosus (strain TM300), this protein is Aspartate--tRNA ligase.